Here is a 176-residue protein sequence, read N- to C-terminus: MEVATLGGGCFWCTEAVFKRVKGVVSVKPGYSGGKVPNPTYEEVCTDETGHAEVVQITFDPSVITYRELLEIFFEIHDPTTPNRQGNDVGSQYRSIILYHSEEQKKIAEEMIKLYERKLGKKVVTELVPFEAFYEAEDYHHDFYDKHKNYPYCKLVIDPKVKKFMKNFPDKASIRI.

The active site involves C10.

It belongs to the MsrA Met sulfoxide reductase family.

It carries out the reaction L-methionyl-[protein] + [thioredoxin]-disulfide + H2O = L-methionyl-(S)-S-oxide-[protein] + [thioredoxin]-dithiol. It catalyses the reaction [thioredoxin]-disulfide + L-methionine + H2O = L-methionine (S)-S-oxide + [thioredoxin]-dithiol. Has an important function as a repair enzyme for proteins that have been inactivated by oxidation. Catalyzes the reversible oxidation-reduction of methionine sulfoxide in proteins to methionine. The chain is Peptide methionine sulfoxide reductase MsrA from Sulfolobus acidocaldarius (strain ATCC 33909 / DSM 639 / JCM 8929 / NBRC 15157 / NCIMB 11770).